We begin with the raw amino-acid sequence, 103 residues long: UPF0145 protein BC_1816 (103 aa).

This sequence belongs to the UPF0145 family.

This chain is UPF0145 protein BC_1816, found in Bacillus cereus (strain ATCC 14579 / DSM 31 / CCUG 7414 / JCM 2152 / NBRC 15305 / NCIMB 9373 / NCTC 2599 / NRRL B-3711).